The following is a 307-amino-acid chain: Small ribosomal subunit protein uS2 (307 aa).

Residues 256–307 are disordered; sequence GGEAEQAAVDATGGAATEETPAAESTGAASEAAAVSEAAEPATEQPAADAEA. A compositionally biased stretch (low complexity) spans 259–307; that stretch reads AEQAAVDATGGAATEETPAAESTGAASEAAAVSEAAEPATEQPAADAEA.

It belongs to the universal ribosomal protein uS2 family.

The chain is Small ribosomal subunit protein uS2 from Nocardioides sp. (strain ATCC BAA-499 / JS614).